The chain runs to 2281 residues: Protein Ycf2 (2281 aa).

Position 1635 to 1642 (1635 to 1642) interacts with ATP; that stretch reads GSIGSGRS.

The protein belongs to the Ycf2 family.

It is found in the plastid. Its subcellular location is the chloroplast stroma. Probable ATPase of unknown function. Its presence in a non-photosynthetic plant (Epifagus virginiana) and experiments in tobacco indicate that it has an essential function which is probably not related to photosynthesis. The chain is Protein Ycf2 from Coffea arabica (Arabian coffee).